The chain runs to 523 residues: Ubiquilin (523 aa).

The region spanning Val-2–Pro-77 is the Ubiquitin-like domain. The tract at residues Leu-70–Gly-99 is disordered. STI1 domains follow at residues Val-100–Met-135 and Asn-139–Met-178. Positions Asn-215–Asn-227 are enriched in low complexity. Positions Asn-215–Gly-325 are disordered. A compositionally biased stretch (polar residues) spans Pro-228–Pro-241. A compositionally biased stretch (low complexity) spans Pro-245–Asn-278. Residues Ser-285–Asn-296 show a composition bias toward gly residues. The span at Asn-297–Gly-310 shows a compositional bias: low complexity. STI1 domains lie at Asp-339–Met-380 and Asn-383–Met-415. Residues Pro-480–Arg-523 enclose the UBA domain.

In terms of biological role, stable protein which acts as an antagonist of nosA by repressing cellular differentiation after the tight-aggregate stage, when cells differentiate into two precursor cell types, prespore and prestalk cells, prior to the formation of fruiting bodies. The protein is Ubiquilin (ubqln) of Dictyostelium discoideum (Social amoeba).